The sequence spans 827 residues: NT-3 growth factor receptor (827 aa).

The signal sequence occupies residues 1 to 31 (MDVSLCPTKCTFWRVFLLWSIWGDYLLSVLA). 2 disulfides stabilise this stretch: C32-C38 and C36-C45. Residues 32 to 430 (CPANCLCSKT…ITVTHKPEED (399 aa)) are Extracellular-facing. N-linked (GlcNAc...) asparagine glycans are attached at residues N68, N72, and N79. LRR repeat units lie at residues 104 to 125 (GLQR…AFAK) and 128 to 149 (HLRY…LFQT). The LRRCT domain occupies 160 to 209 (NPFNCSCDIRWIQLWQEKGEANLQSQQLHCMNLDTAVILLRNMNITQCDL). N-linked (GlcNAc...) asparagine glycosylation is present at N163. Intrachain disulfides connect C164–C189 and C166–C207. N-linked (GlcNAc...) asparagine glycosylation is found at N203, N218, N232, N259, N267, N272, and N294. Ig-like C2-type domains follow at residues 210-300 (PEIS…VLLT) and 319-382 (HCIA…VATN). Cysteines 231 and 284 form a disulfide. A disulfide bond links C320 and C362. Residues N375 and N388 are each glycosylated (N-linked (GlcNAc...) asparagine). The helical transmembrane segment at 431–455 (TFGVSIAVGLAAFACVLLVVLFIMI) threads the bilayer. Residues 456 to 827 (NKYGRRSKFG…ATPIYLDILG (372 aa)) lie on the Cytoplasmic side of the membrane. Y518 carries the post-translational modification Phosphotyrosine; by autocatalysis. Residues 540 to 812 (IVLKRELGEG…LNIKEIYKIL (273 aa)) enclose the Protein kinase domain. ATP-binding positions include 546–554 (LGEGAFGKV) and K574. Residue D681 is the Proton acceptor of the active site. Phosphotyrosine; by autocatalysis occurs at positions 707, 711, 712, and 822.

The protein belongs to the protein kinase superfamily. Tyr protein kinase family. Insulin receptor subfamily. Exists in a dynamic equilibrium between monomeric (low affinity) and dimeric (high affinity) structures. Interacts with PTPRS. Post-translationally, ligand-mediated auto-phosphorylation.

Its subcellular location is the membrane. The enzyme catalyses L-tyrosyl-[protein] + ATP = O-phospho-L-tyrosyl-[protein] + ADP + H(+). Functionally, receptor tyrosine kinase involved in nervous system and probably heart development. Upon binding of its ligand NTF3/neurotrophin-3, NTRK3 autophosphorylates and activates different signaling pathways, including the phosphatidylinositol 3-kinase/AKT and the MAPK pathways, that control cell survival and differentiation. The KT and KD isoforms fail to stimulate transformation, process outgrowth or survival. Isoform KI25 exhibits tyrosine phosphorylation in the absence of ligand and is unable to mediate survival of neuronal cells. This Gallus gallus (Chicken) protein is NT-3 growth factor receptor (NTRK3).